The primary structure comprises 399 residues: Oligoribonuclease NrnB (399 aa).

Requires Mn(2+) as cofactor. Co(2+) is required as a cofactor. The cofactor is Mg(2+).

It is found in the cytoplasm. Its function is as follows. Degrades RNA oligonucleotides with a length of 5 nucleotides in a 3'- to 5'-direction. Less active on shorter RNA oligonucleotides and on those with a length of 24 nucleotides. Prefers RNA oligonucleotides containing adenines rather than cytosines. This is Oligoribonuclease NrnB (nrnB) from Bacillus subtilis (strain 168).